Consider the following 529-residue polypeptide: Bifunctional purine biosynthesis protein PurH (529 aa).

The MGS-like domain occupies aspartate 3–valine 149.

It belongs to the PurH family.

It catalyses the reaction (6R)-10-formyltetrahydrofolate + 5-amino-1-(5-phospho-beta-D-ribosyl)imidazole-4-carboxamide = 5-formamido-1-(5-phospho-D-ribosyl)imidazole-4-carboxamide + (6S)-5,6,7,8-tetrahydrofolate. The catalysed reaction is IMP + H2O = 5-formamido-1-(5-phospho-D-ribosyl)imidazole-4-carboxamide. The protein operates within purine metabolism; IMP biosynthesis via de novo pathway; 5-formamido-1-(5-phospho-D-ribosyl)imidazole-4-carboxamide from 5-amino-1-(5-phospho-D-ribosyl)imidazole-4-carboxamide (10-formyl THF route): step 1/1. It participates in purine metabolism; IMP biosynthesis via de novo pathway; IMP from 5-formamido-1-(5-phospho-D-ribosyl)imidazole-4-carboxamide: step 1/1. This is Bifunctional purine biosynthesis protein PurH from Paracoccus denitrificans (strain Pd 1222).